Here is a 366-residue protein sequence, read N- to C-terminus: Ribosomal RNA large subunit methyltransferase M (366 aa).

S-adenosyl-L-methionine-binding positions include Ser188, 221–224 (CPGG), Asp240, Asp260, and Asp277. Residue Lys306 is the Proton acceptor of the active site.

The protein belongs to the class I-like SAM-binding methyltransferase superfamily. RNA methyltransferase RlmE family. RlmM subfamily. As to quaternary structure, monomer.

It localises to the cytoplasm. It carries out the reaction cytidine(2498) in 23S rRNA + S-adenosyl-L-methionine = 2'-O-methylcytidine(2498) in 23S rRNA + S-adenosyl-L-homocysteine + H(+). In terms of biological role, catalyzes the 2'-O-methylation at nucleotide C2498 in 23S rRNA. The sequence is that of Ribosomal RNA large subunit methyltransferase M from Photorhabdus sp. (strain Az29).